The following is a 623-amino-acid chain: tRNA uridine 5-carboxymethylaminomethyl modification enzyme MnmG (623 aa).

12-17 (GAGHAG) lines the FAD pocket. 272–286 (GPRYCPSIEDKINRF) provides a ligand contact to NAD(+).

It belongs to the MnmG family. As to quaternary structure, homodimer. Heterotetramer of two MnmE and two MnmG subunits. FAD serves as cofactor.

The protein resides in the cytoplasm. In terms of biological role, NAD-binding protein involved in the addition of a carboxymethylaminomethyl (cmnm) group at the wobble position (U34) of certain tRNAs, forming tRNA-cmnm(5)s(2)U34. In Christiangramia forsetii (strain DSM 17595 / CGMCC 1.15422 / KT0803) (Gramella forsetii), this protein is tRNA uridine 5-carboxymethylaminomethyl modification enzyme MnmG.